Here is a 244-residue protein sequence, read N- to C-terminus: 2-C-methyl-D-erythritol 4-phosphate cytidylyltransferase (244 aa).

This sequence belongs to the IspD/TarI cytidylyltransferase family. IspD subfamily.

The catalysed reaction is 2-C-methyl-D-erythritol 4-phosphate + CTP + H(+) = 4-CDP-2-C-methyl-D-erythritol + diphosphate. It functions in the pathway isoprenoid biosynthesis; isopentenyl diphosphate biosynthesis via DXP pathway; isopentenyl diphosphate from 1-deoxy-D-xylulose 5-phosphate: step 2/6. Catalyzes the formation of 4-diphosphocytidyl-2-C-methyl-D-erythritol from CTP and 2-C-methyl-D-erythritol 4-phosphate (MEP). The protein is 2-C-methyl-D-erythritol 4-phosphate cytidylyltransferase of Prosthecochloris aestuarii (strain DSM 271 / SK 413).